The following is a 141-amino-acid chain: Nucleoside diphosphate kinase (141 aa).

ATP contacts are provided by lysine 11, phenylalanine 59, arginine 87, threonine 93, arginine 104, and asparagine 114. Catalysis depends on histidine 117, which acts as the Pros-phosphohistidine intermediate.

Belongs to the NDK family. As to quaternary structure, homotetramer. Mg(2+) is required as a cofactor.

The protein resides in the cytoplasm. The catalysed reaction is a 2'-deoxyribonucleoside 5'-diphosphate + ATP = a 2'-deoxyribonucleoside 5'-triphosphate + ADP. It catalyses the reaction a ribonucleoside 5'-diphosphate + ATP = a ribonucleoside 5'-triphosphate + ADP. Functionally, major role in the synthesis of nucleoside triphosphates other than ATP. The ATP gamma phosphate is transferred to the NDP beta phosphate via a ping-pong mechanism, using a phosphorylated active-site intermediate. In Pseudomonas putida (strain ATCC 47054 / DSM 6125 / CFBP 8728 / NCIMB 11950 / KT2440), this protein is Nucleoside diphosphate kinase.